The primary structure comprises 89 residues: Small ribosomal subunit protein bS20 (89 aa).

Disordered regions lie at residues 1-25 (MANI…ASMK) and 69-89 (KNAA…IQAS). Over residues 7 to 20 (AIKRAKTSEKRRAH) the composition is skewed to basic residues.

Belongs to the bacterial ribosomal protein bS20 family.

Its function is as follows. Binds directly to 16S ribosomal RNA. The protein is Small ribosomal subunit protein bS20 of Geobacillus kaustophilus (strain HTA426).